Reading from the N-terminus, the 650-residue chain is MDTNNCGVCKTIVNPGSERVKAGTSVFHAKCFVCKECKNELESFIRSKDGSLICDECDIKLNARKCFKCQLPIQSTIVTARGKSFHNDCFNCASCEKIIKGGFFFVEGEFYCSTCDAKPSDKTKTTTPPPSEIPLPGKSGVSLANGVEIQVPNNSTNIIYVLNTNESSNGLSSSGGSGNSISGSGGTNTGSSTSSFMIHKRNNSNELNVVTPTATTTVDLLTSSTTTTPTLSPSTLSPPISTARFSNDYLISLQDDIYAKQQQQLLLLQQQQIQIQQQLQQQQLEILQKNQSLLNSSSPSPSTSSTSSTSSISQSQNLNTSQPNITQQLSNLNISNQKNGEIEKYIPKINGKTLTELLKHQSFDDILGEVLSKKISIYKELSKEEVAFGDVIASGASGKVYKGIYKGRDVAIKVYSSENFCFNIEEFDREVTIMSLIDSDHPNFTRFYGANKQNKKYLFHVSELVKSGSLRDLLLDKEKPLAYFTQLSIASDIANAMKHLHSIGVIHRDLKSLNVLITEDFTAKVIDFGTSRNVDLAKQMTLNLGTSCYMSPELFKGNGYDETCDVYAFGIVLWEIIARKEPYENINSWSIPVLVAKGERPTIPADCPSEYSKLIKACWTDKPKKRPSFKEICDTLKKISESLTLKRNKK.

LIM zinc-binding domains lie at 4 to 63 (NNCG…KLNA) and 64 to 122 (RKCF…PSDK). 3 disordered regions span residues 118–138 (KPSD…LPGK), 171–197 (LSSS…SSFM), and 293–320 (LLNS…NLNT). Gly residues predominate over residues 173–188 (SSGGSGNSISGSGGTN). The Protein kinase domain maps to 386-643 (VAFGDVIASG…DTLKKISESL (258 aa)). Residues 392–400 (IASGASGKV) and K413 contribute to the ATP site. D509 acts as the Proton acceptor in catalysis.

This sequence belongs to the protein kinase superfamily. TKL Ser/Thr protein kinase family.

The catalysed reaction is L-seryl-[protein] + ATP = O-phospho-L-seryl-[protein] + ADP + H(+). It catalyses the reaction L-threonyl-[protein] + ATP = O-phospho-L-threonyl-[protein] + ADP + H(+). The polypeptide is Probable LIM domain-containing serine/threonine-protein kinase DDB_G0287001 (Dictyostelium discoideum (Social amoeba)).